A 424-amino-acid chain; its full sequence is Inhibin beta A chain (424 aa).

The N-terminal stretch at 1-20 (MPLLWKRGFLLVICWIIVRS) is a signal peptide. Residues 21–308 (SPTPGSEGHS…EDRQHRRRER (288 aa)) constitute a propeptide that is removed on maturation. Asn165 carries N-linked (GlcNAc...) asparagine glycosylation. Disordered stretches follow at residues 178–200 (QQRQ…LKGE) and 260–288 (KKKK…QSHR). Positions 263–275 (KEDDGEGKEKDGG) are enriched in basic and acidic residues. 4 cysteine pairs are disulfide-bonded: Cys312–Cys320, Cys319–Cys389, Cys348–Cys421, and Cys352–Cys423.

It belongs to the TGF-beta family. As to quaternary structure, dimeric, linked by one or more disulfide bonds. Inhibin A is a dimer of alpha and beta-A. Inhibin B is a dimer of alpha and beta-B. Activin A is a homodimer of beta-A. Activin B is a homodimer of beta-B. Activin AB is a dimer of beta-A and beta-B. As to expression, ciliary ganglion neurons. Levels are higher in the choroid than the iris.

Its subcellular location is the secreted. Inhibins and activins inhibit and activate, respectively, the secretion of follitropin by the pituitary gland. Inhibins/activins are involved in regulating a number of diverse functions such as hypothalamic and pituitary hormone secretion, gonadal hormone secretion, germ cell development and maturation, erythroid differentiation, insulin secretion, nerve cell survival, embryonic axial development or bone growth, depending on their subunit composition. Inhibins appear to oppose the functions of activins. Induces somatostatin in the ciliary ganglion neurons and may play a role in regulating neurotransmitter phenotype. In Gallus gallus (Chicken), this protein is Inhibin beta A chain (INHBA).